Reading from the N-terminus, the 1088-residue chain is DNA-directed RNA polymerase subunit beta (1088 aa).

It belongs to the RNA polymerase beta chain family. As to quaternary structure, in plastids the minimal PEP RNA polymerase catalytic core is composed of four subunits: alpha, beta, beta', and beta''. When a (nuclear-encoded) sigma factor is associated with the core the holoenzyme is formed, which can initiate transcription.

The protein localises to the plastid. It is found in the chloroplast. The enzyme catalyses RNA(n) + a ribonucleoside 5'-triphosphate = RNA(n+1) + diphosphate. Functionally, DNA-dependent RNA polymerase catalyzes the transcription of DNA into RNA using the four ribonucleoside triphosphates as substrates. The polypeptide is DNA-directed RNA polymerase subunit beta (Chlorokybus atmophyticus (Soil alga)).